A 529-amino-acid polypeptide reads, in one-letter code: UPF0159 protein TC_0921 (529 aa).

ThyX domains follow at residues 38–274 (KGAL…AEPH) and 309–511 (KGVK…LKFV).

Belongs to the UPF0159 family.

This Chlamydia muridarum (strain MoPn / Nigg) protein is UPF0159 protein TC_0921.